A 167-amino-acid polypeptide reads, in one-letter code: MLVLLAFIIVFHITSAALLLVATIDNAWWVGEEFFADIWKVCVNNTNCTELNDSVQDFSTVQAVQATMILSTILCCIAFLIFLLQLFRLKQGERFVLTSIIQLMACLCVMIAASIYTDRRKDIHEKNEELYAQTSGGSFGYSFILAWVAFAFTFISGLMYLILRKRK.

Residues 1–21 form a helical membrane-spanning segment; sequence MLVLLAFIIVFHITSAALLLV. N-linked (GlcNAc...) asparagine glycans are attached at residues Asn44, Asn47, and Asn52. The next 3 membrane-spanning stretches (helical) occupy residues 67 to 87, 95 to 115, and 143 to 163; these read TMIL…LQLF, FVLT…AASI, and FILA…YLIL.

This sequence belongs to the PMP-22/EMP/MP20 family. In terms of assembly, interacts with PTK2; regulates PTK2 activation and localization. Interacts with ITGB3; regulates the levels of the heterodimer ITGA5-ITGB3 integrin surface expression. Interacts with P2RX7 (via C-terminus). Interacts with ITGB1; the interaction may be direct or indirect and ITGB1 has a heterodimer form.

The protein resides in the golgi apparatus membrane. The protein localises to the cell membrane. Its subcellular location is the apical cell membrane. It localises to the membrane raft. It is found in the cytoplasm. The protein resides in the nucleus. The protein localises to the perinuclear region. In terms of biological role, functions as a key regulator of cell membrane composition by regulating protein surface expression. Also, plays a role in regulation of processes including cell migration, cell proliferation, cell contraction and cell adhesion. Regulates transepithelial migration of neutrophils into the alveolar lumen, potentially via mediation of cell surface expression of adhesion markers and lipid raft formation. Negatively regulates caveolae formation by reducing CAV1 expression and CAV1 amount by increasing lysosomal degradation. Facilitates surface trafficking and the formation of lipid rafts bearing GPI-anchor proteins. Regulates surface expression of MHC1 and ICAM1 proteins increasing susceptibility to T-cell mediated cytotoxicity. Regulates the plasma membrane expression of the integrin heterodimers ITGA6-ITGB1, ITGA5-ITGB3 and ITGA5-ITGB1 resulting in modulation of cell-matrix adhesion. Also regulates many processes through PTK2. Regulates blood vessel endothelial cell migration and angiogenesis by regulating VEGF protein expression through PTK2 activation. Regulates cell migration and cell contraction through PTK2 and SRC activation. Regulates focal adhesion density, F-actin conformation and cell adhesion capacity through interaction with PTK2. Positively regulates cell proliferation. Plays a role during cell death and cell blebbing. Promotes angiogenesis and vasculogenesis through induction of VEGFA via a HIF1A-dependent pathway. Also plays a role in embryo implantation by regulating surface trafficking of integrin heterodimer ITGA5-ITGB3. Plays a role in placental angiogenesis and uterine natural killer cell regulation at the maternal-fetal placental interface, however not required in the maternal tissues for a viable pregnancy. Involved in the early stages of embryogenic development and cardiogenesis, potentially via regulation of epithelial-mesenchymal transition timing. May play a role in glomerular filtration. In Bos taurus (Bovine), this protein is Epithelial membrane protein 2 (EMP2).